The following is a 181-amino-acid chain: Small ribosomal subunit protein uS4 (181 aa).

The region spanning 104-172 (RRLQTIVYKK…SRPPVMSQQE (69 aa)) is the S4 RNA-binding domain.

Belongs to the universal ribosomal protein uS4 family. As to quaternary structure, part of the 30S ribosomal subunit. Contacts protein S5. The interaction surface between S4 and S5 is involved in control of translational fidelity.

Its function is as follows. One of the primary rRNA binding proteins, it binds directly to 16S rRNA where it nucleates assembly of the body of the 30S subunit. Functionally, with S5 and S12 plays an important role in translational accuracy. This Saccharolobus solfataricus (strain ATCC 35092 / DSM 1617 / JCM 11322 / P2) (Sulfolobus solfataricus) protein is Small ribosomal subunit protein uS4.